A 126-amino-acid polypeptide reads, in one-letter code: Heterotrimeric G protein gamma subunit GPG1 (126 aa).

G proteins are composed of 3 units, alpha, beta and gamma. GPG1 interacts with the beta subunits GBP1 and GPB2.

It is found in the cytoplasm. Its function is as follows. Gamma subunit of a guanine nucleotide-binding protein (G protein). G proteins are involved as modulators or transducers in various transmembrane signaling systems. The beta and gamma chains are required for the GTPase activity, for replacement of GDP by GTP, and for G protein-effector interaction. Involved in the determination of the cAMP level according to nutritional conditions, most probably as a regulator of cAMP phosphodiesterase. Required for the control of pseudohyphal and haploid invasive growth. The polypeptide is Heterotrimeric G protein gamma subunit GPG1 (GPG1) (Saccharomyces cerevisiae (strain ATCC 204508 / S288c) (Baker's yeast)).